We begin with the raw amino-acid sequence, 304 residues long: Aquaglyceroporin-3 (304 aa).

Over 1 to 68 (MQSQPDNVAY…LRLNYRDYMG (68 aa)) the chain is Cytoplasmic. The helical transmembrane segment at 69-89 (ELLGTFVLLFMGNGVVATVII) threads the bilayer. Over 90–95 (DGKLGF) the chain is Extracellular. The chain crosses the membrane as a helical span at residues 96 to 116 (LSITLGWGIAVTMALYVSLGI). The Cytoplasmic segment spans residues 117–142 (SSGHLNPAVTVGNAVFGDFPWRKVPG). Residues 143–163 (YIAAQMLGAFLGAACAYGVFA) traverse the membrane as a helical segment. Residues 164-196 (DLLKAHGGGELIAFGEKGTAGVFSTYPRDSNGL) lie on the Extracellular side of the membrane. Residues 197–217 (FSCIFGEFICTAMLLFCVCGI) form a helical membrane-spanning segment. Residues 218 to 231 (FDPNNSPAKGHEPL) are Cytoplasmic-facing. The helical transmembrane segment at 232–252 (AVGALVFAIGNNIGYSTGYAI) threads the bilayer. Residues 253–277 (NPARDFGPRVFSSFLYGGEVFSHAN) are Extracellular-facing. Residues 278–298 (YYFWVPLVIPLFGGIFGLFLY) form a helical membrane-spanning segment. Residues 299–304 (KYFVPH) are Cytoplasmic-facing.

This sequence belongs to the MIP/aquaporin (TC 1.A.8) family.

It localises to the cell membrane. It carries out the reaction glycerol(in) = glycerol(out). The enzyme catalyses H2O(in) = H2O(out). The catalysed reaction is urea(in) = urea(out). Mediates water and glycerol transport across the cell membrane. Permeable to urea. Permeable to methylamine/methylammonium. Permeable to dihydroxyacetone. Permeable to erythritol and ribitol. The sequence is that of Aquaglyceroporin-3 from Trypanosoma brucei brucei.